The chain runs to 207 residues: Uridine kinase (207 aa).

11–18 is an ATP binding site; that stretch reads GGSGSGKT.

Belongs to the uridine kinase family.

It is found in the cytoplasm. It catalyses the reaction uridine + ATP = UMP + ADP + H(+). The catalysed reaction is cytidine + ATP = CMP + ADP + H(+). It functions in the pathway pyrimidine metabolism; CTP biosynthesis via salvage pathway; CTP from cytidine: step 1/3. It participates in pyrimidine metabolism; UMP biosynthesis via salvage pathway; UMP from uridine: step 1/1. The protein is Uridine kinase of Staphylococcus aureus (strain Mu3 / ATCC 700698).